The primary structure comprises 122 residues: Large ribosomal subunit protein bL12 (122 aa).

This sequence belongs to the bacterial ribosomal protein bL12 family. Homodimer. Part of the ribosomal stalk of the 50S ribosomal subunit. Forms a multimeric L10(L12)X complex, where L10 forms an elongated spine to which 2 to 4 L12 dimers bind in a sequential fashion. Binds GTP-bound translation factors.

Its function is as follows. Forms part of the ribosomal stalk which helps the ribosome interact with GTP-bound translation factors. Is thus essential for accurate translation. This Lacticaseibacillus casei (strain BL23) (Lactobacillus casei) protein is Large ribosomal subunit protein bL12.